A 739-amino-acid chain; its full sequence is Phosphoribosylformylglycinamidine synthase subunit PurL (739 aa).

The active site involves His-49. ATP is bound by residues Tyr-52 and Lys-91. Glu-93 contributes to the Mg(2+) binding site. Residues 94–97 and Arg-116 contribute to the substrate site; that span reads SHNH. The Proton acceptor role is filled by His-95. Asp-117 lines the Mg(2+) pocket. Gln-240 serves as a coordination point for substrate. Position 268 (Asp-268) interacts with Mg(2+). 312–314 contacts substrate; that stretch reads ESQ. Positions 493 and 530 each coordinate ATP. A Mg(2+)-binding site is contributed by Asn-531. A substrate-binding site is contributed by Ser-533.

This sequence belongs to the FGAMS family. In terms of assembly, monomer. Part of the FGAM synthase complex composed of 1 PurL, 1 PurQ and 2 PurS subunits.

The protein resides in the cytoplasm. The catalysed reaction is N(2)-formyl-N(1)-(5-phospho-beta-D-ribosyl)glycinamide + L-glutamine + ATP + H2O = 2-formamido-N(1)-(5-O-phospho-beta-D-ribosyl)acetamidine + L-glutamate + ADP + phosphate + H(+). Its pathway is purine metabolism; IMP biosynthesis via de novo pathway; 5-amino-1-(5-phospho-D-ribosyl)imidazole from N(2)-formyl-N(1)-(5-phospho-D-ribosyl)glycinamide: step 1/2. Functionally, part of the phosphoribosylformylglycinamidine synthase complex involved in the purines biosynthetic pathway. Catalyzes the ATP-dependent conversion of formylglycinamide ribonucleotide (FGAR) and glutamine to yield formylglycinamidine ribonucleotide (FGAM) and glutamate. The FGAM synthase complex is composed of three subunits. PurQ produces an ammonia molecule by converting glutamine to glutamate. PurL transfers the ammonia molecule to FGAR to form FGAM in an ATP-dependent manner. PurS interacts with PurQ and PurL and is thought to assist in the transfer of the ammonia molecule from PurQ to PurL. This Parvibaculum lavamentivorans (strain DS-1 / DSM 13023 / NCIMB 13966) protein is Phosphoribosylformylglycinamidine synthase subunit PurL.